A 239-amino-acid chain; its full sequence is tRNA (guanine-N(1)-)-methyltransferase (239 aa).

S-adenosyl-L-methionine-binding positions include glycine 112 and 131 to 136 (LGDFIL).

The protein belongs to the RNA methyltransferase TrmD family. As to quaternary structure, homodimer.

It localises to the cytoplasm. It carries out the reaction guanosine(37) in tRNA + S-adenosyl-L-methionine = N(1)-methylguanosine(37) in tRNA + S-adenosyl-L-homocysteine + H(+). Functionally, specifically methylates guanosine-37 in various tRNAs. This is tRNA (guanine-N(1)-)-methyltransferase from Clostridium tetani (strain Massachusetts / E88).